Consider the following 88-residue polypeptide: UPF0297 protein GK2555 (88 aa).

It belongs to the UPF0297 family.

The polypeptide is UPF0297 protein GK2555 (Geobacillus kaustophilus (strain HTA426)).